Reading from the N-terminus, the 239-residue chain is LexA repressor (239 aa).

A DNA-binding region (H-T-H motif) is located at residues 26 to 46; it reads FDEMKDALDLASKSGIHRLIT. Positions 84 to 107 are disordered; it reads SPSVIEGSLGKPQPVATPAPAKSV. Residues Ser159 and Lys197 each act as for autocatalytic cleavage activity in the active site.

It belongs to the peptidase S24 family. In terms of assembly, homodimer.

It catalyses the reaction Hydrolysis of Ala-|-Gly bond in repressor LexA.. Functionally, represses a number of genes involved in the response to DNA damage (SOS response), including recA and lexA. In the presence of single-stranded DNA, RecA interacts with LexA causing an autocatalytic cleavage which disrupts the DNA-binding part of LexA, leading to derepression of the SOS regulon and eventually DNA repair. The sequence is that of LexA repressor from Rhizobium johnstonii (strain DSM 114642 / LMG 32736 / 3841) (Rhizobium leguminosarum bv. viciae).